Here is a 375-residue protein sequence, read N- to C-terminus: MFISEIQLKNYRNYEKLELSFEDKVNVIIGENAQGKTNLMEAIYVLAMAKSHRTSNDRELIRWDEDFGQIKGKLQKRNSSLSLELNISKKGKKAKLNQLEQQKLSQYIGVMNVVMFAPEDLNLVKGSPQVRRRFLDMELGQIAPVYLYELSQYQKVLTQRNHLLKKMQGNSKNEETMLDVFTLQLIEHGTKILRKRFEFLHLLQEWAAPIHRGISRGLEELEIVYKPSVDVSESMDLSKIKEVYYESFQSVKQREIFRGTTLIGPHRDDLQFFVNSKNVQVFGSQGQQRTTALSLKLAEIELIYSEVKEYPILLLDDVLSELDDYRQSHLLNTIQGKVQTFVTTTSVDGIEHETLKEAKTIHVTNGTVDCEIDRA.

30 to 37 (GENAQGKT) is an ATP binding site.

Belongs to the RecF family.

The protein localises to the cytoplasm. Its function is as follows. The RecF protein is involved in DNA metabolism; it is required for DNA replication and normal SOS inducibility. RecF binds preferentially to single-stranded, linear DNA. It also seems to bind ATP. The chain is DNA replication and repair protein RecF from Bacillus anthracis (strain A0248).